Reading from the N-terminus, the 190-residue chain is dCTP deaminase, dUMP-forming (190 aa).

DCTP-binding positions include 101–106 (KSSLGR), Asp-119, 127–129 (TLE), Gln-148, Tyr-162, Lys-170, and Gln-174. Glu-129 (proton donor/acceptor) is an active-site residue. The interval 160–190 (HPYGSSRAGSKYQGQRGPTPSRSYQNFIRST) is disordered. Residues 171 to 190 (YQGQRGPTPSRSYQNFIRST) are compositionally biased toward polar residues.

Belongs to the dCTP deaminase family. As to quaternary structure, homotrimer.

It catalyses the reaction dCTP + 2 H2O = dUMP + NH4(+) + diphosphate. It functions in the pathway pyrimidine metabolism; dUMP biosynthesis; dUMP from dCTP: step 1/1. Its function is as follows. Bifunctional enzyme that catalyzes both the deamination of dCTP to dUTP and the hydrolysis of dUTP to dUMP without releasing the toxic dUTP intermediate. This is dCTP deaminase, dUMP-forming from Mycobacterium tuberculosis (strain ATCC 25177 / H37Ra).